Reading from the N-terminus, the 360-residue chain is MVGVRVLAAMSGGVDSAVAAARAAEAGHDVTGVHLALARNPQTYRTGARGCCTLEDSRDARRAADVLSIPFYVWDMADRFQADVVDDFVAEYAAGRTPNPCLRCNEKIKFAAVLDRAVALGFDAVVTGHHARLGADGLLRRSVDLAKDQSYVLGVLTREQLSRSMFPLGDSTKTQVRAEATRRGLAVADKPDSHDICFVADGDTRGFLARRLGTTPGDVVDGDTGEVVGRHTGAYAYTVGQRRGLHLDRPAPDGRPRYVLSITPKTNTVTVGPAEALAVSQVQARRPVWIGGPRPADPVECEVQLRAHGDVVPATVAVTDDGLRAELHQPLRGVAAGQAIVAYRPDPAGDIVLGSATIAA.

Residues 9–16 and leucine 35 contribute to the ATP site; that span reads AMSGGVDS. The Nucleophile role is filled by cysteine 104. Cysteine 104 and cysteine 197 are joined by a disulfide. Glycine 128 provides a ligand contact to ATP. The tract at residues 147–149 is interaction with tRNA; the sequence is KDQ. Catalysis depends on cysteine 197, which acts as the Cysteine persulfide intermediate.

This sequence belongs to the MnmA/TRMU family.

Its subcellular location is the cytoplasm. The enzyme catalyses S-sulfanyl-L-cysteinyl-[protein] + uridine(34) in tRNA + AH2 + ATP = 2-thiouridine(34) in tRNA + L-cysteinyl-[protein] + A + AMP + diphosphate + H(+). In terms of biological role, catalyzes the 2-thiolation of uridine at the wobble position (U34) of tRNA, leading to the formation of s(2)U34. The sequence is that of tRNA-specific 2-thiouridylase MnmA from Salinispora tropica (strain ATCC BAA-916 / DSM 44818 / JCM 13857 / NBRC 105044 / CNB-440).